The sequence spans 848 residues: ATP-dependent RNA helicase dbp10 (848 aa).

The tract at residues D22–D43 is disordered. Residues S69 to R97 carry the Q motif motif. A Helicase ATP-binding domain is found at I100 to V272. A113–T120 contacts ATP. A DEAD box motif is present at residues D220 to D223. A Helicase C-terminal domain is found at R330–S480. The disordered stretch occupies residues N610–K650. A compositionally biased stretch (basic and acidic residues) spans I617–T627. The segment covering D628 to A637 has biased composition (polar residues). A phosphoserine mark is found at S638, S733, and S736. The disordered stretch occupies residues A768 to G813. Basic and acidic residues predominate over residues P789–I812.

The protein belongs to the DEAD box helicase family. DDX54/DBP10 subfamily.

It localises to the nucleus. The protein resides in the nucleolus. The catalysed reaction is ATP + H2O = ADP + phosphate + H(+). Its function is as follows. ATP-binding RNA helicase involved in the biogenesis of 60S ribosomal subunits and is required for the normal formation of 25S and 5.8S rRNAs. The chain is ATP-dependent RNA helicase dbp10 (dbp10) from Schizosaccharomyces pombe (strain 972 / ATCC 24843) (Fission yeast).